We begin with the raw amino-acid sequence, 115 residues long: NADH-ubiquinone oxidoreductase chain 3 (115 aa).

The next 3 helical transmembrane spans lie at 4 to 24, 55 to 75, and 86 to 106; these read MLILLMNIALAAILISLAFWL, FFLVAITFLLFDLEIALLLPL, and MLMTMAFILITILALGLAYEW.

This sequence belongs to the complex I subunit 3 family. In terms of assembly, core subunit of respiratory chain NADH dehydrogenase (Complex I) which is composed of 45 different subunits. Interacts with TMEM186. Interacts with TMEM242.

The protein resides in the mitochondrion inner membrane. The enzyme catalyses a ubiquinone + NADH + 5 H(+)(in) = a ubiquinol + NAD(+) + 4 H(+)(out). Functionally, core subunit of the mitochondrial membrane respiratory chain NADH dehydrogenase (Complex I) which catalyzes electron transfer from NADH through the respiratory chain, using ubiquinone as an electron acceptor. Essential for the catalytic activity of complex I. This Microtus pennsylvanicus (Meadow vole) protein is NADH-ubiquinone oxidoreductase chain 3.